A 273-amino-acid chain; its full sequence is Transposable element Tcb1 transposase (273 aa).

The protein belongs to the transposase 5 family.

The protein localises to the nucleus. Probably essential for transposable element Tcb1 transposition. The insertion of Tcb1 is the main cause of spontaneous mutations. In Caenorhabditis briggsae, this protein is Transposable element Tcb1 transposase.